A 314-amino-acid chain; its full sequence is 4-hydroxy-3-methylbut-2-enyl diphosphate reductase (314 aa).

Cysteine 12 serves as a coordination point for [4Fe-4S] cluster. Histidine 43 and histidine 81 together coordinate (2E)-4-hydroxy-3-methylbut-2-enyl diphosphate. 2 residues coordinate dimethylallyl diphosphate: histidine 43 and histidine 81. Isopentenyl diphosphate is bound by residues histidine 43 and histidine 81. Cysteine 103 provides a ligand contact to [4Fe-4S] cluster. Position 131 (histidine 131) interacts with (2E)-4-hydroxy-3-methylbut-2-enyl diphosphate. Histidine 131 lines the dimethylallyl diphosphate pocket. Residue histidine 131 coordinates isopentenyl diphosphate. Glutamate 133 acts as the Proton donor in catalysis. Residue threonine 170 participates in (2E)-4-hydroxy-3-methylbut-2-enyl diphosphate binding. Cysteine 198 contributes to the [4Fe-4S] cluster binding site. The (2E)-4-hydroxy-3-methylbut-2-enyl diphosphate site is built by serine 226, asparagine 228, and serine 271. The dimethylallyl diphosphate site is built by serine 226, asparagine 228, and serine 271. The isopentenyl diphosphate site is built by serine 226, asparagine 228, and serine 271.

The protein belongs to the IspH family. Requires [4Fe-4S] cluster as cofactor.

It carries out the reaction isopentenyl diphosphate + 2 oxidized [2Fe-2S]-[ferredoxin] + H2O = (2E)-4-hydroxy-3-methylbut-2-enyl diphosphate + 2 reduced [2Fe-2S]-[ferredoxin] + 2 H(+). The catalysed reaction is dimethylallyl diphosphate + 2 oxidized [2Fe-2S]-[ferredoxin] + H2O = (2E)-4-hydroxy-3-methylbut-2-enyl diphosphate + 2 reduced [2Fe-2S]-[ferredoxin] + 2 H(+). It participates in isoprenoid biosynthesis; dimethylallyl diphosphate biosynthesis; dimethylallyl diphosphate from (2E)-4-hydroxy-3-methylbutenyl diphosphate: step 1/1. Its pathway is isoprenoid biosynthesis; isopentenyl diphosphate biosynthesis via DXP pathway; isopentenyl diphosphate from 1-deoxy-D-xylulose 5-phosphate: step 6/6. Catalyzes the conversion of 1-hydroxy-2-methyl-2-(E)-butenyl 4-diphosphate (HMBPP) into a mixture of isopentenyl diphosphate (IPP) and dimethylallyl diphosphate (DMAPP). Acts in the terminal step of the DOXP/MEP pathway for isoprenoid precursor biosynthesis. The protein is 4-hydroxy-3-methylbut-2-enyl diphosphate reductase of Bacillus subtilis (strain 168).